Reading from the N-terminus, the 161-residue chain is Putative 4-hydroxy-4-methyl-2-oxoglutarate aldolase (161 aa).

Substrate contacts are provided by residues 77-80 and R99; that span reads GGNL. Position 100 (D100) interacts with a divalent metal cation.

It belongs to the class II aldolase/RraA-like family. In terms of assembly, homotrimer. It depends on a divalent metal cation as a cofactor.

It catalyses the reaction 4-hydroxy-4-methyl-2-oxoglutarate = 2 pyruvate. The catalysed reaction is oxaloacetate + H(+) = pyruvate + CO2. In terms of biological role, catalyzes the aldol cleavage of 4-hydroxy-4-methyl-2-oxoglutarate (HMG) into 2 molecules of pyruvate. Also contains a secondary oxaloacetate (OAA) decarboxylase activity due to the common pyruvate enolate transition state formed following C-C bond cleavage in the retro-aldol and decarboxylation reactions. The protein is Putative 4-hydroxy-4-methyl-2-oxoglutarate aldolase of Methylococcus capsulatus (strain ATCC 33009 / NCIMB 11132 / Bath).